Reading from the N-terminus, the 589-residue chain is Putative phospholipase B-like 2 (589 aa).

An N-terminal signal peptide occupies residues 1-41; sequence MVGQMYCYPGSHLARALTRALALALVLALLVGPFLSGLAGA. N-linked (GlcNAc...) asparagine glycosylation is found at Asn88 and Asn110. A disulfide bond links Cys142 and Cys152. 3 N-linked (GlcNAc...) asparagine glycosylation sites follow: Asn231, Asn436, and Asn465. Cys492 and Cys495 are disulfide-bonded. Residue Asn515 is glycosylated (N-linked (GlcNAc...) asparagine).

This sequence belongs to the phospholipase B-like family. As to quaternary structure, interacts with IGF2R. The p76 protein is synthesized as a 80 kDa precursor which is then processed into a N-terminal 32 kDa form and a C-terminal 45 kDa form. In terms of processing, glycosylated; contains mannose 6-phosphate sugars. As to expression, ubiquitously expressed, with highest levels in heart, brain and liver.

It is found in the lysosome lumen. Putative phospholipase. The polypeptide is Putative phospholipase B-like 2 (PLBD2) (Homo sapiens (Human)).